The primary structure comprises 63 residues: ORF6 protein (63 aa).

This sequence belongs to the coronaviruses accessory protein 6 family.

The protein localises to the host endoplasmic reticulum membrane. Its subcellular location is the host Golgi apparatus membrane. Its function is as follows. Could be a determinant of virus virulence. Seems to stimulate cellular DNA synthesis in vitro. The protein is ORF6 protein of Bat coronavirus HKU3 (BtCoV).